We begin with the raw amino-acid sequence, 161 residues long: Lipoprotein signal peptidase (161 aa).

The next 3 membrane-spanning stretches (helical) occupy residues 9 to 29 (WLWL…LVVE), 64 to 84 (WQKY…ANVL), and 96 to 113 (MAYA…IDRA). Active-site residues include Asp-120 and Asp-138. The helical transmembrane segment at 133–153 (VFNIADVAIVMGAGLLILETF) threads the bilayer.

This sequence belongs to the peptidase A8 family.

Its subcellular location is the cell inner membrane. It catalyses the reaction Release of signal peptides from bacterial membrane prolipoproteins. Hydrolyzes -Xaa-Yaa-Zaa-|-(S,diacylglyceryl)Cys-, in which Xaa is hydrophobic (preferably Leu), and Yaa (Ala or Ser) and Zaa (Gly or Ala) have small, neutral side chains.. It functions in the pathway protein modification; lipoprotein biosynthesis (signal peptide cleavage). This protein specifically catalyzes the removal of signal peptides from prolipoproteins. This Haemophilus ducreyi (strain 35000HP / ATCC 700724) protein is Lipoprotein signal peptidase.